The sequence spans 426 residues: Enolase (426 aa).

(2R)-2-phosphoglycerate is bound at residue glutamine 162. Glutamate 204 acts as the Proton donor in catalysis. Mg(2+) is bound by residues aspartate 241, glutamate 284, and aspartate 311. (2R)-2-phosphoglycerate-binding residues include lysine 336, arginine 365, serine 366, and lysine 387. The Proton acceptor role is filled by lysine 336.

It belongs to the enolase family. In terms of assembly, component of the RNA degradosome, a multiprotein complex involved in RNA processing and mRNA degradation. Mg(2+) is required as a cofactor.

The protein resides in the cytoplasm. It localises to the secreted. Its subcellular location is the cell surface. It carries out the reaction (2R)-2-phosphoglycerate = phosphoenolpyruvate + H2O. The protein operates within carbohydrate degradation; glycolysis; pyruvate from D-glyceraldehyde 3-phosphate: step 4/5. Functionally, catalyzes the reversible conversion of 2-phosphoglycerate (2-PG) into phosphoenolpyruvate (PEP). It is essential for the degradation of carbohydrates via glycolysis. The polypeptide is Enolase (Thioalkalivibrio sulfidiphilus (strain HL-EbGR7)).